The sequence spans 343 residues: 4-hydroxy-2-oxovalerate aldolase (343 aa).

One can recognise a Pyruvate carboxyltransferase domain in the interval 5–256; sequence ILLCDPTLRD…ETGIDLYKIL (252 aa). 13–14 lines the substrate pocket; sequence RD. Residue aspartate 14 participates in Mn(2+) binding. The Proton acceptor role is filled by histidine 17. Serine 168 and histidine 195 together coordinate substrate. Residues histidine 195 and histidine 197 each contribute to the Mn(2+) site.

The protein belongs to the 4-hydroxy-2-oxovalerate aldolase family. In terms of assembly, interacts with MhpF.

It catalyses the reaction (S)-4-hydroxy-2-oxopentanoate = acetaldehyde + pyruvate. It functions in the pathway aromatic compound metabolism; 3-phenylpropanoate degradation. Functionally, catalyzes the retro-aldol cleavage of 4-hydroxy-2-oxopentanoate to pyruvate and acetaldehyde. Is involved in the meta-cleavage pathway for the degradation of aromatic compounds. This is 4-hydroxy-2-oxovalerate aldolase from Pectobacterium atrosepticum (strain SCRI 1043 / ATCC BAA-672) (Erwinia carotovora subsp. atroseptica).